A 326-amino-acid polypeptide reads, in one-letter code: uncharacterized protein (326 aa).

It belongs to the transferase hexapeptide repeat family.

This is an uncharacterized protein from Escherichia coli (strain K12).